The sequence spans 36 residues: Photosystem I reaction center subunit VIII (36 aa).

Residues 9 to 29 (ILVPLVGLVFPAVTMASLFLY) form a helical membrane-spanning segment.

This sequence belongs to the PsaI family.

Its subcellular location is the plastid. The protein resides in the chloroplast thylakoid membrane. Functionally, may help in the organization of the PsaL subunit. The polypeptide is Photosystem I reaction center subunit VIII (Staurastrum punctulatum (Green alga)).